We begin with the raw amino-acid sequence, 1228 residues long: Nitrate reductase alpha chain (1228 aa).

One can recognise a 4Fe-4S Mo/W bis-MGD-type domain in the interval 47 to 111 (DKVVRSTHGV…SFSWYIYSPL (65 aa)). Residues histidine 54, cysteine 58, cysteine 62, and cysteine 97 each coordinate [4Fe-4S] cluster. Aspartate 227 serves as a coordination point for Mo-bis(molybdopterin guanine dinucleotide).

It belongs to the prokaryotic molybdopterin-containing oxidoreductase family. [4Fe-4S] cluster is required as a cofactor. Mo-bis(molybdopterin guanine dinucleotide) serves as cofactor.

The protein resides in the cell membrane. It carries out the reaction nitrate + a quinol = a quinone + nitrite + H2O. The alpha chain is the actual site of nitrate reduction. The sequence is that of Nitrate reductase alpha chain (narG) from Bacillus subtilis (strain 168).